The primary structure comprises 227 residues: 27 kDa glycoprotein (227 aa).

The N-terminal stretch at 1–17 (MMWKTVLITIFAAGVLA) is a signal peptide. N-linked (GlcNAc...) asparagine glycosylation is found at Asn-118 and Asn-173.

The protein belongs to the UPF0408 family. Expressed in the subesophageal body, fat bodies, hemocytes, midgut and Malpighian tubules. Not expressed in silk glands.

Its subcellular location is the secreted. This chain is 27 kDa glycoprotein, found in Bombyx mori (Silk moth).